The chain runs to 1611 residues: SH3 domain-containing protein C23A1.17 (1611 aa).

One can recognise an SH3 domain in the interval 3–67; it reads SFPTRVVALY…PKDFTEPAED (65 aa). 4 disordered regions span residues 275 to 648, 662 to 741, 762 to 851, and 886 to 1365; these read THPA…PTSL, IDPP…PPGL, AVPR…NSLN, and TPST…FSAK. The span at 278-296 shows a compositional bias: polar residues; the sequence is AASSTMATESSHQSPSADS. The segment covering 300–312 has biased composition (basic and acidic residues); that stretch reads ELSKSQRVAKDDD. The segment covering 316-330 has biased composition (polar residues); the sequence is VSNTANSDEPASSSK. Composition is skewed to acidic residues over residues 361 to 373 and 387 to 420; these read SEQE…DAES and SEPE…QIDP. A compositionally biased stretch (basic and acidic residues) spans 421-433; it reads EEAKRIALRERMA. A compositionally biased stretch (low complexity) spans 472-494; that stretch reads STTNDSSPPKDSSSTSTQPTEQS. A compositionally biased stretch (polar residues) spans 576-586; sequence TQETSEQQVHK. The span at 605–619 shows a compositional bias: basic and acidic residues; it reads FDKETLASNEAHEAV. Residues 637–648 show a composition bias toward low complexity; the sequence is SSSVVTPSPTSL. 3 stretches are compositionally biased toward polar residues: residues 799–808, 886–902, and 923–940; these read SRPSTGSQLR, TPST…SNVA, and ATHQ…QLGS. Pro residues-rich tracts occupy residues 963–974, 1022–1053, and 1076–1241; these read PAAPPSIPPPLP, PPVP…PPVP, and IPAP…PVPA. Residues 1242–1278 show a composition bias toward low complexity; it reads PSSEAPSVSTPRSSVPSPHSNASPSPTSSSMASAAPA. 3 positions are modified to phosphoserine: Ser-1258, Ser-1261, and Ser-1266. Positions 1300-1312 are enriched in basic residues; it reads KSSKSGEHHHHHN. Residues 1317 to 1327 are compositionally biased toward polar residues; that stretch reads DSSSTRTSLAH. Residues 1340–1350 are compositionally biased toward low complexity; it reads RSSSRASKKPS. The span at 1351–1362 shows a compositional bias: polar residues; it reads IVSTTGPFNESF. The residue at position 1379 (Ser-1379) is a Phosphoserine. Phosphothreonine is present on Thr-1380.

The protein localises to the cytoplasm. The sequence is that of SH3 domain-containing protein C23A1.17 from Schizosaccharomyces pombe (strain 972 / ATCC 24843) (Fission yeast).